The following is a 368-amino-acid chain: Chorismate synthase (368 aa).

Positions 48 and 54 each coordinate NADP(+). Residues 131 to 133 (RSS), 243 to 244 (NA), Gly-292, 307 to 311 (KPTSS), and Arg-333 each bind FMN.

Belongs to the chorismate synthase family. In terms of assembly, homotetramer. The cofactor is FMNH2.

The catalysed reaction is 5-O-(1-carboxyvinyl)-3-phosphoshikimate = chorismate + phosphate. Its pathway is metabolic intermediate biosynthesis; chorismate biosynthesis; chorismate from D-erythrose 4-phosphate and phosphoenolpyruvate: step 7/7. Its function is as follows. Catalyzes the anti-1,4-elimination of the C-3 phosphate and the C-6 proR hydrogen from 5-enolpyruvylshikimate-3-phosphate (EPSP) to yield chorismate, which is the branch point compound that serves as the starting substrate for the three terminal pathways of aromatic amino acid biosynthesis. This reaction introduces a second double bond into the aromatic ring system. The chain is Chorismate synthase from Nitrobacter winogradskyi (strain ATCC 25391 / DSM 10237 / CIP 104748 / NCIMB 11846 / Nb-255).